Consider the following 73-residue polypeptide: Conotoxin MaI51 (73 aa).

An N-terminal signal peptide occupies residues 1 to 19 (MQKLTILLLVAAVLLSTQA). A propeptide spanning residues 20–41 (LNQEKRPKEMINVLSKGKTNAE) is cleaved from the precursor. Position 46 is a pyrrolidone carboxylic acid (Gln46). 3 disulfides stabilise this stretch: Cys47–Cys61, Cys54–Cys65, and Cys60–Cys69. The residue at position 72 (Ile72) is an Isoleucine amide.

It belongs to the conotoxin O2 superfamily. In terms of tissue distribution, expressed by the venom duct.

The protein localises to the secreted. This chain is Conotoxin MaI51, found in Conus marmoreus (Marble cone).